Here is a 505-residue protein sequence, read N- to C-terminus: Acetyl-coenzyme A carboxylase carboxyl transferase subunit beta, chloroplastic (505 aa).

Residues 189 to 205 show a composition bias toward low complexity; the sequence is ESVSNSKSGSSSIRTGG. The disordered stretch occupies residues 189–213; that stretch reads ESVSNSKSGSSSIRTGGNSSDFNRR. A CoA carboxyltransferase N-terminal domain is found at 228-499; the sequence is LWVQCENCYG…NQNSSRALGS (272 aa). The Zn(2+) site is built by C232, C235, C251, and C254. The C4-type zinc finger occupies 232-254; it reads CENCYGLNYKKFVSFKMHICEQC.

Belongs to the AccD/PCCB family. In terms of assembly, acetyl-CoA carboxylase is a heterohexamer composed of biotin carboxyl carrier protein, biotin carboxylase and 2 subunits each of ACCase subunit alpha and ACCase plastid-coded subunit beta (accD). The cofactor is Zn(2+).

It localises to the plastid. Its subcellular location is the chloroplast stroma. The enzyme catalyses N(6)-carboxybiotinyl-L-lysyl-[protein] + acetyl-CoA = N(6)-biotinyl-L-lysyl-[protein] + malonyl-CoA. The protein operates within lipid metabolism; malonyl-CoA biosynthesis; malonyl-CoA from acetyl-CoA: step 1/1. Functionally, component of the acetyl coenzyme A carboxylase (ACC) complex. Biotin carboxylase (BC) catalyzes the carboxylation of biotin on its carrier protein (BCCP) and then the CO(2) group is transferred by the transcarboxylase to acetyl-CoA to form malonyl-CoA. The polypeptide is Acetyl-coenzyme A carboxylase carboxyl transferase subunit beta, chloroplastic (Calycanthus floridus var. glaucus (Eastern sweetshrub)).